We begin with the raw amino-acid sequence, 273 residues long: Imidazole glycerol phosphate synthase subunit HisF (273 aa).

Active-site residues include Asp12 and Asp136.

Belongs to the HisA/HisF family. In terms of assembly, heterodimer of HisH and HisF.

The protein localises to the cytoplasm. It catalyses the reaction 5-[(5-phospho-1-deoxy-D-ribulos-1-ylimino)methylamino]-1-(5-phospho-beta-D-ribosyl)imidazole-4-carboxamide + L-glutamine = D-erythro-1-(imidazol-4-yl)glycerol 3-phosphate + 5-amino-1-(5-phospho-beta-D-ribosyl)imidazole-4-carboxamide + L-glutamate + H(+). It participates in amino-acid biosynthesis; L-histidine biosynthesis; L-histidine from 5-phospho-alpha-D-ribose 1-diphosphate: step 5/9. Its function is as follows. IGPS catalyzes the conversion of PRFAR and glutamine to IGP, AICAR and glutamate. The HisF subunit catalyzes the cyclization activity that produces IGP and AICAR from PRFAR using the ammonia provided by the HisH subunit. This is Imidazole glycerol phosphate synthase subunit HisF from Halobacterium salinarum (strain ATCC 29341 / DSM 671 / R1).